The following is a 601-amino-acid chain: HMG domain-containing protein 4 (601 aa).

K8 participates in a covalent cross-link: Glycyl lysine isopeptide (Lys-Gly) (interchain with G-Cter in SUMO2). Disordered stretches follow at residues 51-410 (VRNS…KKKN) and 473-514 (TTVK…ASPA). Residues 82-93 (DYYYGDISSLES) are compositionally biased toward low complexity. S102 is modified (phosphoserine). K191 is covalently cross-linked (Glycyl lysine isopeptide (Lys-Gly) (interchain with G-Cter in SUMO2)). S197 is subject to Phosphoserine. Composition is skewed to polar residues over residues 212-221 (QYPSQQATVK) and 270-282 (DASQFAESHSANL). Positions 316–344 (IKKKKKSKKSKKKKDKEKHKEKRHSKSKR) are enriched in basic residues. Over residues 394–404 (EEKDKERERGE) the composition is skewed to basic and acidic residues. Positions 407-475 (KKKNMSAYQV…KQNKAEATTV (69 aa)) form a DNA-binding region, HMG box. Residues S497, S502, and S512 each carry the phosphoserine modification.

Its subcellular location is the nucleus. Its function is as follows. Negatively regulates Wnt/beta-catenin signaling during development. In Homo sapiens (Human), this protein is HMG domain-containing protein 4 (HMGXB4).